We begin with the raw amino-acid sequence, 542 residues long: Chaperonin GroEL (542 aa).

Residues 29-32 (TLGP), 86-90 (DGTTT), G413, 476-478 (NAA), and D492 contribute to the ATP site. Residues 522–542 (PDENGPAAVPDMGMGGMGGMM) are disordered.

It belongs to the chaperonin (HSP60) family. Forms a cylinder of 14 subunits composed of two heptameric rings stacked back-to-back. Interacts with the co-chaperonin GroES.

The protein localises to the cytoplasm. The enzyme catalyses ATP + H2O + a folded polypeptide = ADP + phosphate + an unfolded polypeptide.. Functionally, together with its co-chaperonin GroES, plays an essential role in assisting protein folding. The GroEL-GroES system forms a nano-cage that allows encapsulation of the non-native substrate proteins and provides a physical environment optimized to promote and accelerate protein folding. This chain is Chaperonin GroEL, found in Listeria monocytogenes serotype 4b (strain CLIP80459).